A 62-amino-acid chain; its full sequence is DNA-directed RNA polymerase subunit Rpo10 (62 aa).

Zn(2+) is bound by residues cysteine 6, cysteine 9, cysteine 43, and cysteine 44.

Belongs to the archaeal Rpo10/eukaryotic RPB10 RNA polymerase subunit family. As to quaternary structure, part of the RNA polymerase complex. Requires Zn(2+) as cofactor.

It localises to the cytoplasm. It catalyses the reaction RNA(n) + a ribonucleoside 5'-triphosphate = RNA(n+1) + diphosphate. DNA-dependent RNA polymerase (RNAP) catalyzes the transcription of DNA into RNA using the four ribonucleoside triphosphates as substrates. This chain is DNA-directed RNA polymerase subunit Rpo10, found in Methanoculleus marisnigri (strain ATCC 35101 / DSM 1498 / JR1).